Consider the following 119-residue polypeptide: Large ribosomal subunit protein uL22 (119 aa).

This sequence belongs to the universal ribosomal protein uL22 family. Part of the 50S ribosomal subunit.

This protein binds specifically to 23S rRNA; its binding is stimulated by other ribosomal proteins, e.g. L4, L17, and L20. It is important during the early stages of 50S assembly. It makes multiple contacts with different domains of the 23S rRNA in the assembled 50S subunit and ribosome. In terms of biological role, the globular domain of the protein is located near the polypeptide exit tunnel on the outside of the subunit, while an extended beta-hairpin is found that lines the wall of the exit tunnel in the center of the 70S ribosome. The chain is Large ribosomal subunit protein uL22 from Chlorobium luteolum (strain DSM 273 / BCRC 81028 / 2530) (Pelodictyon luteolum).